Reading from the N-terminus, the 164-residue chain is Diphosphoinositol polyphosphate phosphohydrolase 3-beta (164 aa).

Substrate contacts are provided by residues Arg-9, 17 to 19 (KKR), and 38 to 40 (SSR). Positions 17-144 (KKRAACLCFR…VHAEYLQKLK (128 aa)) constitute a Nudix hydrolase domain. Residues Gly-49 and Glu-65 each contribute to the Mg(2+) site. The Nudix box motif lies at 50-71 (GGMEPEEEPGGAAVREVFEEAG). The Proton acceptor role is filled by Glu-68. A Mg(2+)-binding site is contributed by Glu-69. Residues 89–91 (RKH), Arg-115, and Lys-133 contribute to the substrate site. Residues 144–164 (KLGGSPTNGNSVAPSPPEGDP) are disordered.

The protein belongs to the Nudix hydrolase family. DIPP subfamily. Mg(2+) serves as cofactor. Requires Mn(2+) as cofactor.

Its subcellular location is the cytoplasm. The enzyme catalyses diphospho-myo-inositol polyphosphate + H2O = myo-inositol polyphosphate + phosphate.. The catalysed reaction is P(1),P(6)-bis(5'-adenosyl) hexaphosphate + H2O = adenosine 5'-pentaphosphate + AMP + 2 H(+). It catalyses the reaction P(1),P(5)-bis(5'-adenosyl) pentaphosphate + H2O = adenosine 5'-tetraphosphate + AMP + 2 H(+). Its function is as follows. Cleaves a beta-phosphate from the diphosphate groups in PP-InsP5 (diphosphoinositol pentakisphosphate), suggesting that it may play a role in signal transduction. Also able to catalyze the hydrolysis of dinucleoside oligophosphates, with Ap6A and Ap5A being the preferred substrates. The major reaction products are ADP and p4a from Ap6A and ADP and ATP from Ap5A. Also able to hydrolyze 5-phosphoribose 1-diphosphate. In Bos taurus (Bovine), this protein is Diphosphoinositol polyphosphate phosphohydrolase 3-beta.